Reading from the N-terminus, the 562-residue chain is Glutamine--tRNA ligase (562 aa).

The 'HIGH' region signature appears at 35–45; the sequence is PEPNGYLHIGH. ATP contacts are provided by residues 36–38 and 42–48; these read EPN and HIGHAKS. Residues Asp68 and Tyr213 each coordinate L-glutamine. ATP contacts are provided by residues Thr232, 262–263, and 270–272; these read RL and LSK. Positions 269 to 273 match the 'KMSKS' region motif; that stretch reads ILSKR.

It belongs to the class-I aminoacyl-tRNA synthetase family. Monomer.

The protein resides in the cytoplasm. It carries out the reaction tRNA(Gln) + L-glutamine + ATP = L-glutaminyl-tRNA(Gln) + AMP + diphosphate. This Buchnera aphidicola subsp. Schizaphis graminum (strain Sg) protein is Glutamine--tRNA ligase.